Reading from the N-terminus, the 262-residue chain is Carbonic anhydrase 13 (262 aa).

The Alpha-carbonic anhydrase domain occupies 4–261; that stretch reads LSWGYREHNG…LKGRKVRASF (258 aa). His-65 serves as the catalytic Proton donor/acceptor. His-95, His-97, and His-120 together coordinate Zn(2+). 200–201 contributes to the substrate binding site; the sequence is TV.

This sequence belongs to the alpha-carbonic anhydrase family. Requires Zn(2+) as cofactor. Expressed in thymus, small intestine, spleen, prostate, ovary, colon and testis.

The catalysed reaction is hydrogencarbonate + H(+) = CO2 + H2O. With respect to regulation, inhibited by acetazolamide. Reversible hydration of carbon dioxide. The sequence is that of Carbonic anhydrase 13 (CA13) from Homo sapiens (Human).